Consider the following 76-residue polypeptide: Acyl carrier protein (76 aa).

Residues 1–76 (MALLDDVKAV…DAIKYIENNA (76 aa)) form the Carrier domain. Serine 36 is subject to O-(pantetheine 4'-phosphoryl)serine.

This sequence belongs to the acyl carrier protein (ACP) family. In terms of processing, 4'-phosphopantetheine is transferred from CoA to a specific serine of apo-ACP by AcpS. This modification is essential for activity because fatty acids are bound in thioester linkage to the sulfhydryl of the prosthetic group.

The protein resides in the cytoplasm. It participates in lipid metabolism; fatty acid biosynthesis. Carrier of the growing fatty acid chain in fatty acid biosynthesis. The protein is Acyl carrier protein of Aliarcobacter butzleri (strain RM4018) (Arcobacter butzleri).